Consider the following 742-residue polypeptide: Polyribonucleotide nucleotidyltransferase (742 aa).

Residues D515 and D521 each contribute to the Mg(2+) site. In terms of domain architecture, KH spans 581–640 (PRIITITIPVDKIGEVIGPKGKIINQIQDDTGASISIEDDGTIYIGATNGEAAEAAKNAV). One can recognise an S1 motif domain in the interval 652-724 (GERYLGTVVK…DRGKLSLVPV (73 aa)).

The protein belongs to the polyribonucleotide nucleotidyltransferase family. It depends on Mg(2+) as a cofactor.

It localises to the cytoplasm. The enzyme catalyses RNA(n+1) + phosphate = RNA(n) + a ribonucleoside 5'-diphosphate. In terms of biological role, involved in mRNA degradation. Catalyzes the phosphorolysis of single-stranded polyribonucleotides processively in the 3'- to 5'-direction. This is Polyribonucleotide nucleotidyltransferase from Nocardioides sp. (strain ATCC BAA-499 / JS614).